Consider the following 339-residue polypeptide: Anthranilate phosphoribosyltransferase (339 aa).

Residues G79, G82 to D83, S87, N89 to T92, K107 to S115, and S119 contribute to the 5-phospho-alpha-D-ribose 1-diphosphate site. G79 lines the anthranilate pocket. S91 is a Mg(2+) binding site. N110 contacts anthranilate. Anthranilate is bound at residue R165. Mg(2+)-binding residues include D224 and E225.

It belongs to the anthranilate phosphoribosyltransferase family. Homodimer. Mg(2+) serves as cofactor.

It carries out the reaction N-(5-phospho-beta-D-ribosyl)anthranilate + diphosphate = 5-phospho-alpha-D-ribose 1-diphosphate + anthranilate. Its pathway is amino-acid biosynthesis; L-tryptophan biosynthesis; L-tryptophan from chorismate: step 2/5. Functionally, catalyzes the transfer of the phosphoribosyl group of 5-phosphorylribose-1-pyrophosphate (PRPP) to anthranilate to yield N-(5'-phosphoribosyl)-anthranilate (PRA). This is Anthranilate phosphoribosyltransferase from Listeria monocytogenes serotype 4a (strain HCC23).